The primary structure comprises 503 residues: Transcription termination/antitermination protein NusA (503 aa).

In terms of domain architecture, S1 motif spans 139–203 (GDIINGIVKR…KGPQIFLSRV (65 aa)). A KH domain is found at 308–378 (SHKVEVVVSQ…LDVEEVIGQL (71 aa)).

The protein belongs to the NusA family. Monomer. Binds directly to the core enzyme of the DNA-dependent RNA polymerase and to nascent RNA.

The protein localises to the cytoplasm. Participates in both transcription termination and antitermination. This Rickettsia prowazekii (strain Madrid E) protein is Transcription termination/antitermination protein NusA.